Consider the following 1002-residue polypeptide: DNA-directed RNA polymerase 1B, mitochondrial (1002 aa).

A mitochondrion-targeting transit peptide spans 1–21 (MWRYISKHAYSRKFRNSHDSA). Catalysis depends on residues Asp-703, Lys-778, and Asp-935.

The protein belongs to the phage and mitochondrial RNA polymerase family.

The protein resides in the mitochondrion. The catalysed reaction is RNA(n) + a ribonucleoside 5'-triphosphate = RNA(n+1) + diphosphate. Functionally, DNA-dependent RNA polymerase catalyzes the transcription of DNA into RNA using the four ribonucleoside triphosphates as substrates. The chain is DNA-directed RNA polymerase 1B, mitochondrial (RPOT1-TOM) from Nicotiana tabacum (Common tobacco).